The primary structure comprises 787 residues: Disintegrin and metalloproteinase domain-containing protein 32 (787 aa).

Residues 1 to 16 form the signal peptide; the sequence is MFRLWLLLAGLCGLLA. Serine 17 is modified (phosphoserine). A propeptide spanning residues 17 to 174 is cleaved from the precursor; the sequence is SRPGFQNSLL…PMDDNIFISE (158 aa). Residues asparagine 39 and asparagine 125 are each glycosylated (N-linked (GlcNAc...) asparagine). The Extracellular portion of the chain corresponds to 175–682; the sequence is KSEPAVPDLF…ERASGKTENT (508 aa). In terms of domain architecture, Peptidase M12B spans 186 to 383; sequence LYLEMHIVVD…VGVKCLQNKP (198 aa). Disulfide bonds link cysteine 295-cysteine 378, cysteine 337-cysteine 362, cysteine 339-cysteine 344, and cysteine 450-cysteine 471. Residues 391–479 enclose the Disintegrin domain; that stretch reads KPVCGNGRLE…ECGPDITLIN (89 aa). Residues asparagine 465 and asparagine 598 are each glycosylated (N-linked (GlcNAc...) asparagine). Positions 622 to 654 constitute an EGF-like domain; the sequence is SAHVCSQQCSGHGVCDSRNKCHCSPGYKPPNCQ. Disulfide bonds link cysteine 626/cysteine 636, cysteine 630/cysteine 642, and cysteine 644/cysteine 653. The chain crosses the membrane as a helical span at residues 683–703; it reads WLLGFLIALPILIVTTAIVLA. Topologically, residues 704–787 are cytoplasmic; the sequence is RKQLKKWFAK…DSTQTQSSSN (84 aa). The tract at residues 715-787 is disordered; the sequence is EEFPSSESKS…DSTQTQSSSN (73 aa). A compositionally biased stretch (polar residues) spans 728 to 749; the sequence is TQTYASQSSSEGSTQTYASQTR. Positions 771-787 are enriched in low complexity; that stretch reads TSRSKSQDSTQTQSSSN.

In terms of tissue distribution, testis specific.

It localises to the membrane. May play a role in sperm development and fertilization This is a non-catalytic metalloprotease-like protein. This is Disintegrin and metalloproteinase domain-containing protein 32 (ADAM32) from Homo sapiens (Human).